The sequence spans 251 residues: Hydroxyacylglutathione hydrolase (251 aa).

His53, His55, Asp57, His58, His110, Asp127, and His165 together coordinate Zn(2+).

This sequence belongs to the metallo-beta-lactamase superfamily. Glyoxalase II family. As to quaternary structure, monomer. Zn(2+) serves as cofactor.

It carries out the reaction an S-(2-hydroxyacyl)glutathione + H2O = a 2-hydroxy carboxylate + glutathione + H(+). The protein operates within secondary metabolite metabolism; methylglyoxal degradation; (R)-lactate from methylglyoxal: step 2/2. Thiolesterase that catalyzes the hydrolysis of S-D-lactoyl-glutathione to form glutathione and D-lactic acid. The protein is Hydroxyacylglutathione hydrolase of Escherichia coli O9:H4 (strain HS).